The sequence spans 251 residues: CDP-diacylglycerol pyrophosphatase (251 aa).

Residues alanine 4 to tryptophan 24 traverse the membrane as a helical segment.

The protein belongs to the Cdh family.

The protein localises to the cell inner membrane. The catalysed reaction is a CDP-1,2-diacyl-sn-glycerol + H2O = a 1,2-diacyl-sn-glycero-3-phosphate + CMP + 2 H(+). It participates in phospholipid metabolism; CDP-diacylglycerol degradation; phosphatidate from CDP-diacylglycerol: step 1/1. The chain is CDP-diacylglycerol pyrophosphatase from Escherichia coli (strain ATCC 8739 / DSM 1576 / NBRC 3972 / NCIMB 8545 / WDCM 00012 / Crooks).